The chain runs to 526 residues: Arylsulfatase G (526 aa).

An N-terminal signal peptide occupies residues 1 to 16 (MGWLFLKVLLVGMVFS). Ca(2+)-binding residues include Asp44, Asp45, and Cys84. Cys84 (nucleophile) is an active-site residue. At Cys84 the chain carries 3-oxoalanine (Cys). Asn117 is a glycosylation site (N-linked (GlcNAc...) asparagine). Lys137 is a substrate binding site. The active site involves His139. Position 162 (Ser162) interacts with substrate. The N-linked (GlcNAc...) asparagine glycan is linked to Asn215. Substrate is bound at residue His251. Residues Asp302 and Asn303 each coordinate Ca(2+). 2 N-linked (GlcNAc...) asparagine glycosylation sites follow: Asn356 and Asn497.

Belongs to the sulfatase family. Ca(2+) is required as a cofactor. Post-translationally, N-glycosylated with both high mannose and complex type sugars. In terms of processing, the conversion to 3-oxoalanine (also known as C-formylglycine, FGly), of a serine or cysteine residue in prokaryotes and of a cysteine residue in eukaryotes, is critical for catalytic activity. 63-kDa precursor undergoes proteolytic processing in two steps, yielding two fragments in the first step (apparent molecular masses of 44 and 18 kDa). In the second step, the 44-kDa fragment is processed further to the 34- and 10-kDa chains. The 10-kDa chain is a cleavage product of the 44-kDa fragment but linked to the 18-kDa chain through a disulfide bridge.

The protein localises to the lysosome. It catalyses the reaction an aryl sulfate + H2O = a phenol + sulfate + H(+). The enzyme catalyses Hydrolysis of the 3-sulfate groups of the N-sulfo-D-glucosamine 3-O-sulfate units of heparin.. Its function is as follows. Displays arylsulfatase activity at acidic pH towards the artificial substrate p-nitrocatechol sulfate. Catalyzes the hydrolysis of the 3-sulfate groups of the N-sulfo-D-glucosamine 3-O-sulfate units of heparin. The chain is Arylsulfatase G (Arsg) from Rattus norvegicus (Rat).